The primary structure comprises 147 residues: Flagellar assembly factor FliW (147 aa).

This sequence belongs to the FliW family. In terms of assembly, interacts with translational regulator CsrA and flagellin(s).

It localises to the cytoplasm. Acts as an anti-CsrA protein, binds CsrA and prevents it from repressing translation of its target genes, one of which is flagellin. Binds to flagellin and participates in the assembly of the flagellum. The polypeptide is Flagellar assembly factor FliW (Treponema denticola (strain ATCC 35405 / DSM 14222 / CIP 103919 / JCM 8153 / KCTC 15104)).